Reading from the N-terminus, the 397-residue chain is Subtilisin-like protease 3 (397 aa).

An N-terminal signal peptide occupies residues Met1–Ala19. The propeptide occupies Arg20 to Ala116. Positions Ser35–Ala116 constitute an Inhibitor I9 domain. Positions Thr126 to Gln397 constitute a Peptidase S8 domain. Active-site charge relay system residues include Asp158 and His189. N-linked (GlcNAc...) asparagine glycosylation occurs at Asn250. Ser344 acts as the Charge relay system in catalysis. Asn393 carries N-linked (GlcNAc...) asparagine glycosylation.

Belongs to the peptidase S8 family.

The protein localises to the secreted. Its function is as follows. Secreted subtilisin-like serine protease with keratinolytic activity that contributes to pathogenicity. The chain is Subtilisin-like protease 3 (SUB3) from Trichophyton equinum (Horse ringworm fungus).